A 177-amino-acid polypeptide reads, in one-letter code: Protein BROTHER of FT and TFL 1 (177 aa).

The protein belongs to the phosphatidylethanolamine-binding protein family.

It is found in the cytoplasm. Functionally, may form complexes with phosphorylated ligands by interfering with kinases and their effectors. This chain is Protein BROTHER of FT and TFL 1 (BFT), found in Arabidopsis thaliana (Mouse-ear cress).